We begin with the raw amino-acid sequence, 247 residues long: C-type lectin domain family 7 member A (247 aa).

At 1 to 44 (MEYHPDLENLDEDGYTQLHFDSQSNTRIAVVSEKGSCAASPPWR) the chain is on the cytoplasmic side. The ITAM-like signature appears at 15–18 (YTQL). Residues 45-65 (LIAVILGILCLVILVIAVVLG) form a helical; Signal-anchor for type II membrane protein membrane-spanning segment. Over 66-247 (TMAIWRSNSG…YSICEKKFSM (182 aa)) the chain is Extracellular. N91 is a glycosylation site (N-linked (GlcNAc...) asparagine). Cystine bridges form between C120–C131, C148–C241, and C220–C233. Positions 127–242 (YEKSCYLFSM…CSVPSYSICE (116 aa)) constitute a C-type lectin domain. A (1,3-beta-D-glucosyl)n-binding site is contributed by 146–153 (RQCWQLGS). A divalent metal cation is bound by residues K157, D159, and E163. (1,3-beta-D-glucosyl)n is bound at residue E195. E242 is a binding site for a divalent metal cation.

Homodimer. Interacts with SYK; participates in leukocyte activation in presence of fungal pathogens. Interacts with CD37; this interaction controls CLEC7A-mediated IL-6 production. As to quaternary structure, interacts with RANBP9. Post-translationally, phosphorylated on tyrosine residues in response to beta-glucan binding. Highly expressed in peripheral blood leukocytes and dendritic cells. Detected in spleen, bone marrow, lung, muscle, stomach and placenta.

It localises to the cell membrane. The protein resides in the cytoplasm. Lectin that functions as a pattern recognizing receptor (PRR) specific for beta-1,3-linked and beta-1,6-linked glucans, which constitute cell wall constituents from pathogenic bacteria and fungi. Necessary for the TLR2-mediated inflammatory response and activation of NF-kappa-B: upon beta-glucan binding, recruits SYK via its ITAM motif and promotes a signaling cascade that activates some CARD domain-BCL10-MALT1 (CBM) signalosomes, leading to the activation of NF-kappa-B and MAP kinase p38 (MAPK11, MAPK12, MAPK13 and/or MAPK14) pathways which stimulate expression of genes encoding pro-inflammatory cytokines and chemokines. Enhances cytokine production in macrophages and dendritic cells. Mediates production of reactive oxygen species in the cell. Mediates phagocytosis of C.albicans conidia. Binds T-cells in a way that does not involve their surface glycans and plays a role in T-cell activation. Stimulates T-cell proliferation. Induces phosphorylation of SCIMP after binding beta-glucans. The protein is C-type lectin domain family 7 member A of Homo sapiens (Human).